Reading from the N-terminus, the 726-residue chain is DNA-directed RNA polymerase subunit beta N-terminal section (726 aa).

The protein belongs to the RNA polymerase beta chain family. In terms of assembly, in plastids the minimal PEP RNA polymerase catalytic core is composed of four subunits: alpha, beta, beta', and beta''. When a (nuclear-encoded) sigma factor is associated with the core the holoenzyme is formed, which can initiate transcription.

The protein localises to the plastid. It is found in the chloroplast. The enzyme catalyses RNA(n) + a ribonucleoside 5'-triphosphate = RNA(n+1) + diphosphate. DNA-dependent RNA polymerase catalyzes the transcription of DNA into RNA using the four ribonucleoside triphosphates as substrates. The protein is DNA-directed RNA polymerase subunit beta N-terminal section (rpoB1) of Tetradesmus obliquus (Green alga).